An 87-amino-acid chain; its full sequence is uncharacterized protein (87 aa).

A signal peptide spans 1–22; sequence MKIKTTVAALSVLSVLSFGAFA.

Belongs to the BhsA/McbA family.

The protein resides in the periplasm. This is an uncharacterized protein from Escherichia coli O6:H1 (strain CFT073 / ATCC 700928 / UPEC).